Here is an 827-residue protein sequence, read N- to C-terminus: 6-phosphofructo-2-kinase 1 (827 aa).

Disordered stretches follow at residues methionine 1–alanine 97 and threonine 149–isoleucine 175. Over residues serine 31–arginine 41 the composition is skewed to low complexity. A compositionally biased stretch (basic and acidic residues) spans serine 42–lysine 59. The span at threonine 72 to alanine 97 shows a compositional bias: polar residues. Serine 92 bears the Phosphoserine mark. Threonine 157 carries the phosphothreonine modification. Glycine 190–serine 197 lines the ATP pocket. Active-site residues include aspartate 277 and cysteine 309. Arginine 343 lines the beta-D-fructose 6-phosphate pocket. Serine 404 serves as the catalytic Phosphoserine intermediate. Glutamate 497 is a catalytic residue. The active-site Proton donor is histidine 565. Phosphoserine occurs at positions 644, 652, 659, and 667. Disordered stretches follow at residues alanine 649–asparagine 704 and histidine 799–valine 827. A compositionally biased stretch (low complexity) spans serine 671–glutamine 682. Polar residues predominate over residues proline 683–asparagine 704.

It carries out the reaction beta-D-fructose 6-phosphate + ATP = beta-D-fructose 2,6-bisphosphate + ADP + H(+). Phosphorylation results in the activation of the kinase activity. In terms of biological role, synthesis of fructose 2,6-bisphosphate. This is 6-phosphofructo-2-kinase 1 (PFK26) from Saccharomyces cerevisiae (strain ATCC 204508 / S288c) (Baker's yeast).